The sequence spans 122 residues: Small ribosomal subunit protein uS8c (122 aa).

The protein belongs to the universal ribosomal protein uS8 family. In terms of assembly, part of the 30S ribosomal subunit.

The protein localises to the plastid. The protein resides in the chloroplast. One of the primary rRNA binding proteins, it binds directly to 16S rRNA central domain where it helps coordinate assembly of the platform of the 30S subunit. This is Small ribosomal subunit protein uS8c (rps8) from Ostreococcus tauri.